The following is a 365-amino-acid chain: Chorismate synthase (365 aa).

Positions 48 and 54 each coordinate NADP(+). Residues 125 to 127, 238 to 239, A278, 293 to 297, and R319 each bind FMN; these read RSS, NA, and KPTSS.

This sequence belongs to the chorismate synthase family. As to quaternary structure, homotetramer. FMNH2 serves as cofactor.

The catalysed reaction is 5-O-(1-carboxyvinyl)-3-phosphoshikimate = chorismate + phosphate. It participates in metabolic intermediate biosynthesis; chorismate biosynthesis; chorismate from D-erythrose 4-phosphate and phosphoenolpyruvate: step 7/7. Catalyzes the anti-1,4-elimination of the C-3 phosphate and the C-6 proR hydrogen from 5-enolpyruvylshikimate-3-phosphate (EPSP) to yield chorismate, which is the branch point compound that serves as the starting substrate for the three terminal pathways of aromatic amino acid biosynthesis. This reaction introduces a second double bond into the aromatic ring system. This Pseudoalteromonas translucida (strain TAC 125) protein is Chorismate synthase.